The following is a 118-amino-acid chain: NADPH-dependent 7-cyano-7-deazaguanine reductase (118 aa).

Cysteine 31 functions as the Thioimide intermediate in the catalytic mechanism. Aspartate 38 acts as the Proton donor in catalysis. Residues 53–55 and 72–73 contribute to the substrate site; these read VEL and YE.

The protein belongs to the GTP cyclohydrolase I family. QueF type 1 subfamily.

It localises to the cytoplasm. It carries out the reaction 7-aminomethyl-7-carbaguanine + 2 NADP(+) = 7-cyano-7-deazaguanine + 2 NADPH + 3 H(+). It functions in the pathway tRNA modification; tRNA-queuosine biosynthesis. Catalyzes the NADPH-dependent reduction of 7-cyano-7-deazaguanine (preQ0) to 7-aminomethyl-7-deazaguanine (preQ1). The polypeptide is NADPH-dependent 7-cyano-7-deazaguanine reductase (Chlorobium phaeobacteroides (strain BS1)).